A 442-amino-acid chain; its full sequence is tRNA pseudouridine(38/39) synthase (442 aa).

D151 serves as the catalytic Nucleophile. Residue Y222 participates in substrate binding.

The protein belongs to the tRNA pseudouridine synthase TruA family.

It is found in the nucleus. It catalyses the reaction uridine(38/39) in tRNA = pseudouridine(38/39) in tRNA. In terms of biological role, formation of pseudouridines at positions 38 and 39 in the anticodon stem and loop of transfer RNAs. The chain is tRNA pseudouridine(38/39) synthase (DEG1) from Saccharomyces cerevisiae (strain ATCC 204508 / S288c) (Baker's yeast).